Here is a 180-residue protein sequence, read N- to C-terminus: ATP synthase subunit b (180 aa).

The chain crosses the membrane as a helical span at residues 15 to 35; it reads LIPEVPELVIGLLAFAIVFFV.

Belongs to the ATPase B chain family. As to quaternary structure, F-type ATPases have 2 components, F(1) - the catalytic core - and F(0) - the membrane proton channel. F(1) has five subunits: alpha(3), beta(3), gamma(1), delta(1), epsilon(1). F(0) has three main subunits: a(1), b(2) and c(10-14). The alpha and beta chains form an alternating ring which encloses part of the gamma chain. F(1) is attached to F(0) by a central stalk formed by the gamma and epsilon chains, while a peripheral stalk is formed by the delta and b chains.

The protein localises to the cell membrane. F(1)F(0) ATP synthase produces ATP from ADP in the presence of a proton or sodium gradient. F-type ATPases consist of two structural domains, F(1) containing the extramembraneous catalytic core and F(0) containing the membrane proton channel, linked together by a central stalk and a peripheral stalk. During catalysis, ATP synthesis in the catalytic domain of F(1) is coupled via a rotary mechanism of the central stalk subunits to proton translocation. In terms of biological role, component of the F(0) channel, it forms part of the peripheral stalk, linking F(1) to F(0). This is ATP synthase subunit b from Streptomyces avermitilis (strain ATCC 31267 / DSM 46492 / JCM 5070 / NBRC 14893 / NCIMB 12804 / NRRL 8165 / MA-4680).